We begin with the raw amino-acid sequence, 803 residues long: Myb-like protein V (803 aa).

Disordered regions lie at residues Ser237–Leu333 and Lys429–Lys803. Positions Asp258–Ser323 form a coiled coil. Over residues Asp271 to Asp294 the composition is skewed to acidic residues. Positions Ser295–Asn315 are enriched in low complexity. The Myb-like domain occupies Gly332 to Arg379. 2 coiled-coil regions span residues Glu400–Lys429 and Asn463–Val496. Polar residues predominate over residues Lys429 to Ser438. 2 stretches are compositionally biased toward acidic residues: residues Asn448–Asp480 and Glu510–Glu533. Composition is skewed to basic residues over residues Lys537–Lys553 and His568–Gln577. Residues Lys573–Lys616 are a coiled coil. Positions Glu586–Glu609 are enriched in acidic residues. Low complexity-rich tracts occupy residues Thr625 to Thr636 and Lys666 to Lys733. The segment covering Leu786–Lys795 has biased composition (basic and acidic residues).

The chain is Myb-like protein V (mybV) from Dictyostelium discoideum (Social amoeba).